A 403-amino-acid polypeptide reads, in one-letter code: Argininosuccinate synthase (403 aa).

ATP contacts are provided by residues 10–18 (AYSGGLDTS) and alanine 37. Residues tyrosine 88 and serine 93 each coordinate L-citrulline. Glycine 118 lines the ATP pocket. L-aspartate is bound by residues threonine 120, asparagine 124, and aspartate 125. L-citrulline is bound at residue asparagine 124. Arginine 128, serine 178, serine 187, glutamate 263, and tyrosine 275 together coordinate L-citrulline.

It belongs to the argininosuccinate synthase family. Type 1 subfamily. As to quaternary structure, homotetramer.

The protein resides in the cytoplasm. It catalyses the reaction L-citrulline + L-aspartate + ATP = 2-(N(omega)-L-arginino)succinate + AMP + diphosphate + H(+). It functions in the pathway amino-acid biosynthesis; L-arginine biosynthesis; L-arginine from L-ornithine and carbamoyl phosphate: step 2/3. This Marinobacter nauticus (strain ATCC 700491 / DSM 11845 / VT8) (Marinobacter aquaeolei) protein is Argininosuccinate synthase.